The primary structure comprises 186 residues: Akirin-1 (186 aa).

The interval 1–64 (MACGATLKRS…PLPQLGGDRR (64 aa)) is disordered. Positions 22–27 (PKRRRC) match the Nuclear localization signal motif. Low complexity predominate over residues 49 to 60 (QQGQQQPLPQLG). The short motif at 183–186 (SYVS) is the SYVS motif element.

The protein belongs to the akirin family.

It is found in the nucleus. Its function is as follows. Molecular adapter that acts as a bridge between proteins, and which is involved skeletal muscle development. Functions as a signal transducer for MSTN during skeletal muscle regeneration and myogenesis. The sequence is that of Akirin-1 from Xenopus tropicalis (Western clawed frog).